Here is a 28-residue protein sequence, read N- to C-terminus: Ranatuerin-2AVa (28 aa).

Cysteines 23 and 28 form a disulfide.

As to expression, expressed by the skin glands.

It is found in the secreted. Functionally, has antibacterial activity against the Gram positive bacterium L.lactis. In Rana arvalis (Moor frog), this protein is Ranatuerin-2AVa.